The primary structure comprises 515 residues: MKDSSNLLEMRNISKEFPGVKALDNVTLKVKKGSVHALMGENGAGKSTLMKCLFGIYHPNSGEIFISGQKVQFKNSKHALDNGVSMVHQELNQVRERNVMDNLWLGRYPKKGLFIDEKKMYDETEKIFKDLDINVNPRDKVSTLSVSQMQMVEIAKAVSYKSKIIVMDEPTSSLTEKEVSHLFKIINKLRKQGISIIYISHKMEEILEISDEVTIMRDGKWIATEKASDLTMDLIIKLMVGRELTDRFPKKDHIPKETILEVNNLSDAKNELKNVSFKLRKGEILGIAGLVGAKRTETLETLFGLREKGSGDIILHGKKVDNSKPFKAMQNGFALVTEERRQTGIFGKLPIDFNSIIANIDSYKTSTGLLSNGRISKDTQWVINSMKVKTPSQKTLIGSLSGGNQQKIVIGKWLLRKPEILLLDEPTRGIDVGAKFEIYQLINELAKEDKGIIMVSSEMPELLGVCDRILVMSNGMISGIVNANQTTQEEIMHLSAKYLSVTGGVNNANQIKEKV.

ABC transporter domains lie at 8-243 (LEMR…VGRE) and 254-499 (IPKE…AKYL). ATP is bound at residue 40–47 (GENGAGKS).

The protein belongs to the ABC transporter superfamily. Galactose/methyl galactoside importer (TC 3.A.1.2.3) family. As to quaternary structure, the complex is composed of one ATP-binding protein (MglA), two transmembrane proteins (MglC) and a solute-binding protein (MglB).

The protein resides in the cell membrane. The catalysed reaction is D-galactose(out) + ATP + H2O = D-galactose(in) + ADP + phosphate + H(+). The enzyme catalyses methyl beta-D-galactoside(out) + ATP + H2O = methyl beta-D-galactoside(in) + ADP + phosphate + H(+). Its function is as follows. Part of the ABC transporter complex MglABC involved in galactose/methyl galactoside import. Responsible for energy coupling to the transport system. The sequence is that of Galactose/methyl galactoside import ATP-binding protein MglA from Clostridium perfringens (strain SM101 / Type A).